The sequence spans 130 residues: Sulfurtransferase TusD (130 aa).

Cysteine 80 functions as the Cysteine persulfide intermediate in the catalytic mechanism.

The protein belongs to the DsrE/TusD family. Heterohexamer, formed by a dimer of trimers. The hexameric TusBCD complex contains 2 copies each of TusB, TusC and TusD. The TusBCD complex interacts with TusE.

Its subcellular location is the cytoplasm. In terms of biological role, part of a sulfur-relay system required for 2-thiolation of 5-methylaminomethyl-2-thiouridine (mnm(5)s(2)U) at tRNA wobble positions. Accepts sulfur from TusA and transfers it in turn to TusE. This Proteus mirabilis (strain HI4320) protein is Sulfurtransferase TusD.